A 232-amino-acid chain; its full sequence is Small ribosomal subunit protein uS2 (232 aa).

It belongs to the universal ribosomal protein uS2 family.

In Desulforamulus reducens (strain ATCC BAA-1160 / DSM 100696 / MI-1) (Desulfotomaculum reducens), this protein is Small ribosomal subunit protein uS2.